The primary structure comprises 171 residues: Shikimate kinase (171 aa).

Position 14–19 (14–19) interacts with ATP; it reads GAGKST. Residue S18 participates in Mg(2+) binding. Positions 36, 60, and 82 each coordinate substrate. R120 contacts ATP. R139 contacts substrate. Q156 provides a ligand contact to ATP.

The protein belongs to the shikimate kinase family. In terms of assembly, monomer. Mg(2+) serves as cofactor.

Its subcellular location is the cytoplasm. It carries out the reaction shikimate + ATP = 3-phosphoshikimate + ADP + H(+). Its pathway is metabolic intermediate biosynthesis; chorismate biosynthesis; chorismate from D-erythrose 4-phosphate and phosphoenolpyruvate: step 5/7. Functionally, catalyzes the specific phosphorylation of the 3-hydroxyl group of shikimic acid using ATP as a cosubstrate. The chain is Shikimate kinase from Shewanella woodyi (strain ATCC 51908 / MS32).